A 163-amino-acid chain; its full sequence is Protein-export protein SecB (163 aa).

Belongs to the SecB family. As to quaternary structure, homotetramer, a dimer of dimers. One homotetramer interacts with 1 SecA dimer.

It is found in the cytoplasm. In terms of biological role, one of the proteins required for the normal export of preproteins out of the cell cytoplasm. It is a molecular chaperone that binds to a subset of precursor proteins, maintaining them in a translocation-competent state. It also specifically binds to its receptor SecA. This is Protein-export protein SecB from Pseudomonas aeruginosa (strain LESB58).